The following is a 70-amino-acid chain: NAD(P)H-quinone oxidoreductase subunit O (70 aa).

It belongs to the complex I NdhO subunit family. In terms of assembly, NDH-1 can be composed of about 15 different subunits; different subcomplexes with different compositions have been identified which probably have different functions.

Its subcellular location is the cellular thylakoid membrane. It carries out the reaction a plastoquinone + NADH + (n+1) H(+)(in) = a plastoquinol + NAD(+) + n H(+)(out). The enzyme catalyses a plastoquinone + NADPH + (n+1) H(+)(in) = a plastoquinol + NADP(+) + n H(+)(out). Its function is as follows. NDH-1 shuttles electrons from an unknown electron donor, via FMN and iron-sulfur (Fe-S) centers, to quinones in the respiratory and/or the photosynthetic chain. The immediate electron acceptor for the enzyme in this species is believed to be plastoquinone. Couples the redox reaction to proton translocation, and thus conserves the redox energy in a proton gradient. Cyanobacterial NDH-1 also plays a role in inorganic carbon-concentration. The protein is NAD(P)H-quinone oxidoreductase subunit O of Nostoc sp. (strain PCC 7120 / SAG 25.82 / UTEX 2576).